Here is a 243-residue protein sequence, read N- to C-terminus: Small ribosomal subunit protein uS5 (243 aa).

A disordered region spans residues 1-54 (MSDNEKETQVAEETQNTQATAESSNNDERRGRRNNRGGEGRRGDRRGRREDNHE). Residues 11-24 (AEETQNTQATAESS) show a composition bias toward polar residues. Positions 26 to 54 (NDERRGRRNNRGGEGRRGDRRGRREDNHE) are enriched in basic and acidic residues. In terms of domain architecture, S5 DRBM spans 57–120 (MLDRVVTINR…LDAKKHLFNV (64 aa)).

This sequence belongs to the universal ribosomal protein uS5 family. Part of the 30S ribosomal subunit. Contacts proteins S4 and S8.

Functionally, with S4 and S12 plays an important role in translational accuracy. Located at the back of the 30S subunit body where it stabilizes the conformation of the head with respect to the body. This Bifidobacterium animalis subsp. lactis (strain AD011) protein is Small ribosomal subunit protein uS5.